Reading from the N-terminus, the 300-residue chain is MKVLKVKVPATTANLGAGFDTLGLALTLYNEFIVEEHDGVVIETEPKNEFLEIPENNLFIQVIKYACERRGKTFHGAKLKQINRVPVARGLGSSATAIVGAIVVSSAVSKTELTDDIFFDIAYRFEPHPDNLIPAWKGGFITALKDREKTYYNSIDFPEDIKAVVVIPEFELSTEKARSVLPERIPLRDGIFNVQRVSLFLSALQNRRYDLLRVAMEDRFHQPYRKKLIPNFDRVVQNGYDAGALGVSLSGAGSAILALADRNFEEIGKAMTEGFSEAGIRSEYKILDIDREGANLEILE.

An ATP-binding site is contributed by P86 to T96.

It belongs to the GHMP kinase family. Homoserine kinase subfamily.

It localises to the cytoplasm. It carries out the reaction L-homoserine + ATP = O-phospho-L-homoserine + ADP + H(+). The protein operates within amino-acid biosynthesis; L-threonine biosynthesis; L-threonine from L-aspartate: step 4/5. Its function is as follows. Catalyzes the ATP-dependent phosphorylation of L-homoserine to L-homoserine phosphate. In Persephonella marina (strain DSM 14350 / EX-H1), this protein is Homoserine kinase.